We begin with the raw amino-acid sequence, 297 residues long: Ribosomal RNA small subunit methyltransferase A (297 aa).

6 residues coordinate S-adenosyl-L-methionine: Asn31, Leu33, Gly58, Glu79, Asp104, and Asn129.

It belongs to the class I-like SAM-binding methyltransferase superfamily. rRNA adenine N(6)-methyltransferase family. RsmA subfamily.

It localises to the cytoplasm. The catalysed reaction is adenosine(1518)/adenosine(1519) in 16S rRNA + 4 S-adenosyl-L-methionine = N(6)-dimethyladenosine(1518)/N(6)-dimethyladenosine(1519) in 16S rRNA + 4 S-adenosyl-L-homocysteine + 4 H(+). Its function is as follows. Specifically dimethylates two adjacent adenosines (A1518 and A1519) in the loop of a conserved hairpin near the 3'-end of 16S rRNA in the 30S particle. May play a critical role in biogenesis of 30S subunits. The polypeptide is Ribosomal RNA small subunit methyltransferase A (Staphylococcus aureus (strain Newman)).